The primary structure comprises 273 residues: Putative phosphoenolpyruvate synthase regulatory protein (273 aa).

Position 153–160 (153–160 (AVSRAGKT)) interacts with ADP.

Belongs to the pyruvate, phosphate/water dikinase regulatory protein family. PSRP subfamily.

The enzyme catalyses [pyruvate, water dikinase] + ADP = [pyruvate, water dikinase]-phosphate + AMP + H(+). The catalysed reaction is [pyruvate, water dikinase]-phosphate + phosphate + H(+) = [pyruvate, water dikinase] + diphosphate. Its function is as follows. Bifunctional serine/threonine kinase and phosphorylase involved in the regulation of the phosphoenolpyruvate synthase (PEPS) by catalyzing its phosphorylation/dephosphorylation. This is Putative phosphoenolpyruvate synthase regulatory protein from Xanthomonas campestris pv. campestris (strain ATCC 33913 / DSM 3586 / NCPPB 528 / LMG 568 / P 25).